The primary structure comprises 81 residues: Carboxysome shell vertex protein CsoS4B (81 aa).

Residues M1–D77 form the BMV domain.

Belongs to the CcmL/EutN family. CsoS4 subfamily. In terms of assembly, homopentamer.

The protein localises to the carboxysome. Its function is as follows. Probably forms vertices in the carboxysome. Has been modeled to induce curvature upon insertion into an otherwise flat hexagonal layer of major carboxysome subunits. A minor shell protein, only 12 pentamers of CsoS4A/CsoS4B are calculated to be present in each carboxysome. The 2 CsoS4 proteins contribute to the impermeability of the carboxysome to CO(2). Its central pore is probably too small to allow passage of metabolites; its function might be to anchor different proteins or metabolites to the carboxysome. Functionally, unlike beta-carboxysomes, alpha-carboxysomes (Cb) can form without cargo protein. CsoS2 is essential for Cb formation and is also capable of targeting foreign proteins to the Cb. The Cb shell assembles with the aid of CsoS2; CsoS1A, CsoS1B and CsoS1C form the majority of the shell while CsoS4A and CsoS4B form vertices. CsoS1D forms pseudohexamers that probably control metabolite flux into and out of the shell. This chain is Carboxysome shell vertex protein CsoS4B, found in Halothiobacillus neapolitanus (strain ATCC 23641 / c2) (Thiobacillus neapolitanus).